A 205-amino-acid chain; its full sequence is Potassium-transporting ATPase KdpC subunit (205 aa).

Residues 9–29 (VFAVLFLFILGFVYPTVTSLI) traverse the membrane as a helical segment.

The protein belongs to the KdpC family. The system is composed of three essential subunits: KdpA, KdpB and KdpC.

The protein localises to the cell membrane. In terms of biological role, part of the high-affinity ATP-driven potassium transport (or Kdp) system, which catalyzes the hydrolysis of ATP coupled with the electrogenic transport of potassium into the cytoplasm. This subunit acts as a catalytic chaperone that increases the ATP-binding affinity of the ATP-hydrolyzing subunit KdpB by the formation of a transient KdpB/KdpC/ATP ternary complex. The sequence is that of Potassium-transporting ATPase KdpC subunit from Thermoplasma acidophilum (strain ATCC 25905 / DSM 1728 / JCM 9062 / NBRC 15155 / AMRC-C165).